A 220-amino-acid chain; its full sequence is Protein Syd (220 aa).

The protein belongs to the Syd family.

Its subcellular location is the cell inner membrane. Its function is as follows. Interacts with the SecY protein in vivo. May bind preferentially to an uncomplexed state of SecY, thus functioning either as a chelating agent for excess SecY in the cell or as a regulatory factor that negatively controls the translocase function. This chain is Protein Syd, found in Shewanella loihica (strain ATCC BAA-1088 / PV-4).